A 466-amino-acid polypeptide reads, in one-letter code: Ribulose bisphosphate carboxylase large chain (466 aa).

Position 5 is an N6,N6,N6-trimethyllysine (lysine 5). Asparagine 114 and threonine 164 together coordinate substrate. Residue lysine 166 is the Proton acceptor of the active site. Lysine 168 is a binding site for substrate. Residues lysine 192, aspartate 194, and glutamate 195 each contribute to the Mg(2+) site. N6-carboxylysine is present on lysine 192. Histidine 285 functions as the Proton acceptor in the catalytic mechanism. Substrate is bound by residues arginine 286, histidine 318, and serine 370.

This sequence belongs to the RuBisCO large chain family. Type I subfamily. As to quaternary structure, heterohexadecamer of 8 large chains and 8 small chains; disulfide-linked. The disulfide link is formed within the large subunit homodimers. Mg(2+) serves as cofactor. In terms of processing, the disulfide bond which can form in the large chain dimeric partners within the hexadecamer appears to be associated with oxidative stress and protein turnover.

It localises to the plastid. It is found in the chloroplast. The catalysed reaction is 2 (2R)-3-phosphoglycerate + 2 H(+) = D-ribulose 1,5-bisphosphate + CO2 + H2O. The enzyme catalyses D-ribulose 1,5-bisphosphate + O2 = 2-phosphoglycolate + (2R)-3-phosphoglycerate + 2 H(+). In terms of biological role, ruBisCO catalyzes two reactions: the carboxylation of D-ribulose 1,5-bisphosphate, the primary event in carbon dioxide fixation, as well as the oxidative fragmentation of the pentose substrate in the photorespiration process. Both reactions occur simultaneously and in competition at the same active site. This chain is Ribulose bisphosphate carboxylase large chain, found in Cucurbita pepo (Vegetable marrow).